Here is a 93-residue protein sequence, read N- to C-terminus: MADITDIKSIIYTEKSLGLQEEGYVVIQTSEKMTKNQLKAVLKEYFGVTPVKINSLRMKGKTKRFRGVEGKRDNYKKFYVKLPEGASIESLAV.

The protein belongs to the universal ribosomal protein uL23 family. Part of the 50S ribosomal subunit. Contacts protein L29, and trigger factor when it is bound to the ribosome.

One of the early assembly proteins it binds 23S rRNA. One of the proteins that surrounds the polypeptide exit tunnel on the outside of the ribosome. Forms the main docking site for trigger factor binding to the ribosome. This Nitratiruptor sp. (strain SB155-2) protein is Large ribosomal subunit protein uL23.